The primary structure comprises 181 residues: ATP-dependent protease subunit ClpQ (181 aa).

Serine 2 is an active-site residue. Na(+)-binding residues include glycine 165, cysteine 168, and threonine 171.

As to quaternary structure, a double ring-shaped homohexamer of ClpQ is capped on each side by a ring-shaped ClpY homohexamer. The assembly of the ClpQ/ClpY complex is dependent on binding of ATP.

It is found in the cytoplasm. Protease subunit of a proteasome-like degradation complex. This is ATP-dependent protease subunit ClpQ (clpQ) from Bacillus subtilis (strain 168).